The sequence spans 131 residues: Large ribosomal subunit protein eL14 (131 aa).

It belongs to the eukaryotic ribosomal protein eL14 family. Component of the large ribosomal subunit. Mature ribosomes consist of a small (40S) and a large (60S) subunit. The 40S subunit contains about 32 different proteins and 1 molecule of RNA (18S). The 60S subunit contains 45 different proteins and 3 molecules of RNA (25S, 5.8S and 5S).

It is found in the cytoplasm. Functionally, component of the ribosome, a large ribonucleoprotein complex responsible for the synthesis of proteins in the cell. The small ribosomal subunit (SSU) binds messenger RNAs (mRNAs) and translates the encoded message by selecting cognate aminoacyl-transfer RNA (tRNA) molecules. The large subunit (LSU) contains the ribosomal catalytic site termed the peptidyl transferase center (PTC), which catalyzes the formation of peptide bonds, thereby polymerizing the amino acids delivered by tRNAs into a polypeptide chain. The nascent polypeptides leave the ribosome through a tunnel in the LSU and interact with protein factors that function in enzymatic processing, targeting, and the membrane insertion of nascent chains at the exit of the ribosomal tunnel. The protein is Large ribosomal subunit protein eL14 of Candida albicans (strain SC5314 / ATCC MYA-2876) (Yeast).